Consider the following 258-residue polypeptide: MPKTLTEKLNAIKATGKGIFVPYIMAGDHEKGLDGLGETIHFLEDLGVSAIEVGIPFSDPVADGPVIEEAGLRSLAHGTSTQALVETLKTIETEIPLVIMTYFNPLFQYGVENFVKDLADTAVKGLIIPDLPHEHANFVEPFLADTDIALIPLVSLTTGIERQKELIEGAEGFVYAVAINGVTGKSGNYRADLDKHLAQLHQVADIPVLTGFGVSSQADLERFNAVSDGVIVGSKIVKALHQGEPIQDFIRQAVAYQK.

Catalysis depends on proton acceptor residues glutamate 52 and aspartate 63.

It belongs to the TrpA family. Tetramer of two alpha and two beta chains.

It catalyses the reaction (1S,2R)-1-C-(indol-3-yl)glycerol 3-phosphate + L-serine = D-glyceraldehyde 3-phosphate + L-tryptophan + H2O. It functions in the pathway amino-acid biosynthesis; L-tryptophan biosynthesis; L-tryptophan from chorismate: step 5/5. In terms of biological role, the alpha subunit is responsible for the aldol cleavage of indoleglycerol phosphate to indole and glyceraldehyde 3-phosphate. In Streptococcus pneumoniae serotype 2 (strain D39 / NCTC 7466), this protein is Tryptophan synthase alpha chain.